Consider the following 221-residue polypeptide: Leucyl/phenylalanyl-tRNA--protein transferase (221 aa).

It belongs to the L/F-transferase family.

Its subcellular location is the cytoplasm. It carries out the reaction N-terminal L-lysyl-[protein] + L-leucyl-tRNA(Leu) = N-terminal L-leucyl-L-lysyl-[protein] + tRNA(Leu) + H(+). The enzyme catalyses N-terminal L-arginyl-[protein] + L-leucyl-tRNA(Leu) = N-terminal L-leucyl-L-arginyl-[protein] + tRNA(Leu) + H(+). The catalysed reaction is L-phenylalanyl-tRNA(Phe) + an N-terminal L-alpha-aminoacyl-[protein] = an N-terminal L-phenylalanyl-L-alpha-aminoacyl-[protein] + tRNA(Phe). In terms of biological role, functions in the N-end rule pathway of protein degradation where it conjugates Leu, Phe and, less efficiently, Met from aminoacyl-tRNAs to the N-termini of proteins containing an N-terminal arginine or lysine. The protein is Leucyl/phenylalanyl-tRNA--protein transferase of Phenylobacterium zucineum (strain HLK1).